Reading from the N-terminus, the 328-residue chain is Tetraacyldisaccharide 4'-kinase (328 aa).

Position 55–62 (T55–T62) interacts with ATP.

Belongs to the LpxK family.

The enzyme catalyses a lipid A disaccharide + ATP = a lipid IVA + ADP + H(+). It functions in the pathway glycolipid biosynthesis; lipid IV(A) biosynthesis; lipid IV(A) from (3R)-3-hydroxytetradecanoyl-[acyl-carrier-protein] and UDP-N-acetyl-alpha-D-glucosamine: step 6/6. Its function is as follows. Transfers the gamma-phosphate of ATP to the 4'-position of a tetraacyldisaccharide 1-phosphate intermediate (termed DS-1-P) to form tetraacyldisaccharide 1,4'-bis-phosphate (lipid IVA). This chain is Tetraacyldisaccharide 4'-kinase, found in Shigella boydii serotype 18 (strain CDC 3083-94 / BS512).